A 220-amino-acid chain; its full sequence is Deoxyribose-phosphate aldolase (220 aa).

Residue aspartate 89 is the Proton donor/acceptor of the active site. The Schiff-base intermediate with acetaldehyde role is filled by lysine 151. Lysine 180 (proton donor/acceptor) is an active-site residue.

This sequence belongs to the DeoC/FbaB aldolase family. DeoC type 1 subfamily.

It localises to the cytoplasm. It carries out the reaction 2-deoxy-D-ribose 5-phosphate = D-glyceraldehyde 3-phosphate + acetaldehyde. It participates in carbohydrate degradation; 2-deoxy-D-ribose 1-phosphate degradation; D-glyceraldehyde 3-phosphate and acetaldehyde from 2-deoxy-alpha-D-ribose 1-phosphate: step 2/2. In terms of biological role, catalyzes a reversible aldol reaction between acetaldehyde and D-glyceraldehyde 3-phosphate to generate 2-deoxy-D-ribose 5-phosphate. This Lactococcus lactis subsp. lactis (strain IL1403) (Streptococcus lactis) protein is Deoxyribose-phosphate aldolase.